Reading from the N-terminus, the 261-residue chain is tRNA pseudouridine synthase A (261 aa).

The Nucleophile role is filled by Asp-53. Residue Tyr-111 coordinates substrate.

The protein belongs to the tRNA pseudouridine synthase TruA family. As to quaternary structure, homodimer.

It carries out the reaction uridine(38/39/40) in tRNA = pseudouridine(38/39/40) in tRNA. Functionally, formation of pseudouridine at positions 38, 39 and 40 in the anticodon stem and loop of transfer RNAs. This Shouchella clausii (strain KSM-K16) (Alkalihalobacillus clausii) protein is tRNA pseudouridine synthase A.